A 184-amino-acid chain; its full sequence is Photosystem I assembly protein Ycf4 (184 aa).

2 helical membrane passes run 19-39 and 64-84; these read ISNF…VLVG and LVMS…WCTI.

This sequence belongs to the Ycf4 family.

The protein localises to the plastid. The protein resides in the chloroplast thylakoid membrane. Its function is as follows. Seems to be required for the assembly of the photosystem I complex. This is Photosystem I assembly protein Ycf4 from Oenothera elata subsp. hookeri (Hooker's evening primrose).